The following is a 320-amino-acid chain: Pantothenate kinase (320 aa).

96–103 (GSVAVGKS) contacts ATP.

This sequence belongs to the prokaryotic pantothenate kinase family.

It localises to the cytoplasm. The enzyme catalyses (R)-pantothenate + ATP = (R)-4'-phosphopantothenate + ADP + H(+). Its pathway is cofactor biosynthesis; coenzyme A biosynthesis; CoA from (R)-pantothenate: step 1/5. The sequence is that of Pantothenate kinase from Brevibacillus brevis (strain 47 / JCM 6285 / NBRC 100599).